A 326-amino-acid polypeptide reads, in one-letter code: Methyltransferase phqN (326 aa).

Belongs to the class I-like SAM-binding methyltransferase superfamily. Erg6/SMT family.

It participates in alkaloid biosynthesis. Functionally, methyltransferase; part of the gene cluster that mediates the biosynthesis of paraherquamide, a fungal indole alkaloid that belongs to a family of natural products containing a characteristic bicyclo[2.2.2]diazaoctane core. The first steps in the biosynthesis of paraherquamide is the production of the beta-methyl-proline precursor from L-isoleucine. They require oxidation of a terminally hydroxylated L-isoleucine to the corresponding aldehyde by enzymes which have still to be identified. Spontaneous cyclization and dehydration would yield the 4-methyl pyrolline-5-carboxylic acid, which is then reduced by the pyrroline-5-carboxylate reductase phqD leading to the beta-methyl-proline precursor. The next step of paraherquamide biosynthesis involves coupling of beta-methyl-proline and L-tryptophan by the bimodular NRPS phqB, to produce a monooxopiperazine intermediate. The reductase (R) domain of phqB utilizes NADPH for hydride transfer to reduce the thioester bond of the T domain-tethered linear dipeptide to a hemithioaminal intermediate, which spontaneously cleaves the C-S bond to release the aldehyde product. This compound undergoes spontaneous cyclization and dehydration to give a dienamine which is reverse prenylated at C-2 by the reverse prenyltransferase phqJ. The other prenyltransferase present in the cluster, phqI may be a redundant gene in the pathway. During biosynthetic assembly, the key step to produce the polycyclic core is catalyzed by the bifunctional reductase and intramolecular [4+2] Diels-Alderase, phqE, resulting in formation of the [2.2.2] diazaoctane intermediate preparaherquamide. Following formation of preparaherquamide, an indole 2,3-epoxidation-initiated pinacol-like rearrangement is catalyzed by the phqK FAD-dependent monooxygenase. The prenyltransferase phqA, the cytochrome P450 monooxygenase phqL, and the FAD-linked oxidoreductase phqH (or the cytochrome P450 monooxygenase phqM), are proposed to be involved in the formation of the pyran ring. The FAD-dependent monooxygenase phqK is likely responsible for generation of the spiro-oxindole, and the N-methylation is likely mediated by the phqN methyltransferase leading to the isolable natural product paraherquamide F. However, the order of these biosynthetic steps has still to be determined. In late-stage paraherquamide biosynthesis, the third P450 monooxygenase, phqO, is probably responsible for the C-14 hydroxylation, transforming paraherquamide F to paraherquamide G, and paraherquamide E to the final product paraherquamide A. The expansion from the 6-membered ring pyran (in paraherquamides F and G) to the 7-membered dioxepin ring (in paraherquamides A and E) represents a poorly understood but intriguing process that probably involves the 2-oxoglutarate-dependent dioxygenase phqC. Finally, the remaining members of the paraherquamide cluster, including phqI as well as phqM (or phqH), do not have a clearly prescribed role and appear to be redundant. The chain is Methyltransferase phqN from Penicillium fellutanum.